The following is a 591-amino-acid chain: V-type ATP synthase alpha chain (591 aa).

233–240 serves as a coordination point for ATP; sequence GPFGAGKT.

It belongs to the ATPase alpha/beta chains family.

The enzyme catalyses ATP + H2O + 4 H(+)(in) = ADP + phosphate + 5 H(+)(out). Functionally, produces ATP from ADP in the presence of a proton gradient across the membrane. The V-type alpha chain is a catalytic subunit. The chain is V-type ATP synthase alpha chain from Streptococcus pyogenes serotype M12 (strain MGAS2096).